A 110-amino-acid chain; its full sequence is Insulin (110 aa).

A signal peptide spans 1-23 (MALWLQAFTLLVLLVLSSPGAQS). Intrachain disulfides connect C30–C96, C42–C109, and C95–C100. Residues 56–87 (DVDPLLGFLSPKSAQENEADEYPYKDQGDLKV) constitute a propeptide, c peptide.

This sequence belongs to the insulin family. As to quaternary structure, heterodimer of a B chain and an A chain linked by two disulfide bonds.

It is found in the secreted. Insulin decreases blood glucose concentration. It increases cell permeability to monosaccharides, amino acids and fatty acids. It accelerates glycolysis, the pentose phosphate cycle, and glycogen synthesis in liver. The sequence is that of Insulin (ins) from Pantodon buchholzi (Freshwater butterflyfish).